The chain runs to 93 residues: MARLDDATIASLLQEIPGWERQGDALVRTYVFKNFREAMAFVNRVAELAEEARHHPDITIRYNRVHLLLTTHEAGGITERDIALARKLAELAS.

The protein belongs to the pterin-4-alpha-carbinolamine dehydratase family.

The enzyme catalyses (4aS,6R)-4a-hydroxy-L-erythro-5,6,7,8-tetrahydrobiopterin = (6R)-L-erythro-6,7-dihydrobiopterin + H2O. The polypeptide is Putative pterin-4-alpha-carbinolamine dehydratase (Thermomicrobium roseum (strain ATCC 27502 / DSM 5159 / P-2)).